The sequence spans 227 residues: Uracil-DNA glycosylase (227 aa).

Aspartate 65 functions as the Proton acceptor in the catalytic mechanism.

Belongs to the uracil-DNA glycosylase (UDG) superfamily. UNG family.

The protein localises to the cytoplasm. The enzyme catalyses Hydrolyzes single-stranded DNA or mismatched double-stranded DNA and polynucleotides, releasing free uracil.. In terms of biological role, excises uracil residues from the DNA which can arise as a result of misincorporation of dUMP residues by DNA polymerase or due to deamination of cytosine. This chain is Uracil-DNA glycosylase, found in Lactobacillus delbrueckii subsp. bulgaricus (strain ATCC 11842 / DSM 20081 / BCRC 10696 / JCM 1002 / NBRC 13953 / NCIMB 11778 / NCTC 12712 / WDCM 00102 / Lb 14).